We begin with the raw amino-acid sequence, 393 residues long: tRNA(Met) cytidine acetate ligase (393 aa).

ATP contacts are provided by G81, N142, and R167.

Belongs to the TmcAL family.

The protein localises to the cytoplasm. The catalysed reaction is cytidine(34) in elongator tRNA(Met) + acetate + ATP = N(4)-acetylcytidine(34) in elongator tRNA(Met) + AMP + diphosphate. Catalyzes the formation of N(4)-acetylcytidine (ac(4)C) at the wobble position of elongator tRNA(Met), using acetate and ATP as substrates. First activates an acetate ion to form acetyladenylate (Ac-AMP) and then transfers the acetyl group to tRNA to form ac(4)C34. The chain is tRNA(Met) cytidine acetate ligase from Bacillus cytotoxicus (strain DSM 22905 / CIP 110041 / 391-98 / NVH 391-98).